The sequence spans 2697 residues: Target of rapamycin homolog (2697 aa).

The tract at residues 1-25 (MLQQHGISFQMNADRQNKAATTSNR) is disordered. HEAT repeat units follow at residues 235–272 (LRVNLFFKYIFNAVRDKNPAVRIAGIDALHVVLTIVSQ), 649–687 (QTIYGVLRAVCSVIVNDQDVRVRMQVISCFGQMPRPFLA), 689–726 (LAQPEMLEVQFMALHDEKLEMQQACVTLLGRLAELNPA), 731–768 (RLRLMLLETLSQMQQSGQARLEQHSAKMIAQLAKQSPK), 815–853 (KNLKPLFEKLTHMINDSSSLHKREAALRAIGGICRSTAY), 863–900 (SLLDDLLRILKTVMSNTMRREAIKTLGILGAIDPYTHK), and 1073–1110 (KYTGELIPYLLTVLQTDKTKERVLTVKVMESIQKLTHC). In terms of domain architecture, FAT spans 1438–2153 (VLGRWAEQTK…IYALTVASRS (716 aa)). 2 disordered regions span residues 1945-1981 (TVISPPQQPQQPKKMHIPPVTRATSPPPPAQKSPQPA) and 2017-2039 (SNSSLPPQHHHVSPLSNDSPSNS). Over residues 1969–1981 (SPPPPAQKSPQPA) the composition is skewed to pro residues. Over residues 2030–2039 (PLSNDSPSNS) the composition is skewed to polar residues. Residues 2332 to 2647 (FSSKMNVITS…TTDSIMETIK (316 aa)) enclose the PI3K/PI4K catalytic domain. The G-loop stretch occupies residues 2338–2344 (VITSKQR). Positions 2512 to 2520 (GLGDRHPSN) are catalytic loop. Residues 2532–2557 (HIDFGDCFEVAMLREKFPERVPFRLT) are activation loop. The tract at residues 2615–2635 (DPKTRKDTGGRQNMAGAVLPS) is disordered. Positions 2665-2697 (EPLQVTEQLAMLTEQATSPLNLCQSYIGWCPFW) constitute an FATC domain.

Belongs to the PI3/PI4-kinase family. In terms of tissue distribution, ubiquitous. Expressed in all major tissues and organs, including the intestine, gonads and hypodermal cells. Expressed in neurons.

The protein resides in the nucleus. The enzyme catalyses L-seryl-[protein] + ATP = O-phospho-L-seryl-[protein] + ADP + H(+). The catalysed reaction is L-threonyl-[protein] + ATP = O-phospho-L-threonyl-[protein] + ADP + H(+). In terms of biological role, serine/threonine-protein kinase that regulates the mRNA translation machinery, probably by modulating the activity of translation factors such as eIF-4G and eIF-2. It may have some protein kinase activity instead of lipid kinase activity. May play a role in P-granule degradation by autophagy in somatic cells during embryogenesis. Required, during larval development, for the establishment of the proper number of germline progenitors, probably upstream of rsks-1 and ife-1. Required for larval development. May act as a mediator of lifespan regulation by insulin signaling and nutrient sensing. The chain is Target of rapamycin homolog from Caenorhabditis elegans.